Consider the following 227-residue polypeptide: PKHD-type hydroxylase BamMC406_4714 (227 aa).

One can recognise a Fe2OG dioxygenase domain in the interval 78–178 (KVFPPLFNRY…RVASFFWIQS (101 aa)). Residues H96, D98, and H159 each contribute to the Fe cation site. R169 is a binding site for 2-oxoglutarate.

It depends on Fe(2+) as a cofactor. The cofactor is L-ascorbate.

In Burkholderia ambifaria (strain MC40-6), this protein is PKHD-type hydroxylase BamMC406_4714.